A 630-amino-acid polypeptide reads, in one-letter code: DNA topoisomerase 4 subunit B (630 aa).

Residues tyrosine 5, asparagine 42, aspartate 69, 110–116 (GLHGVGI), and lysine 334 contribute to the ATP site. The Toprim domain maps to 412 to 525 (TELFLVEGDS…HGHVYVALPP (114 aa)). Mg(2+)-binding residues include glutamate 418, aspartate 490, and aspartate 492.

It belongs to the type II topoisomerase family. ParE type 1 subfamily. As to quaternary structure, heterotetramer composed of ParC and ParE. Requires Mg(2+) as cofactor. It depends on Mn(2+) as a cofactor. The cofactor is Ca(2+).

It catalyses the reaction ATP-dependent breakage, passage and rejoining of double-stranded DNA.. With respect to regulation, pyrrolopyrimidines inhibit both GyrB and its paralog in topoisomerase IV (parE). Functionally, topoisomerase IV is essential for chromosome segregation; it is the principal protein responsible for decatenating newly replicated chromosomes. It relaxes supercoiled DNA. MukB stimulates the relaxation activity of topoisomerase IV and also has a modest effect on decatenation. This Escherichia coli (strain K12) protein is DNA topoisomerase 4 subunit B.